The chain runs to 144 residues: 3-dehydroquinate dehydratase (144 aa).

The Proton acceptor role is filled by tyrosine 22. Residues asparagine 73, histidine 79, and aspartate 86 each coordinate substrate. Catalysis depends on histidine 99, which acts as the Proton donor. Substrate contacts are provided by residues 100-101 (LS) and arginine 110.

It belongs to the type-II 3-dehydroquinase family. As to quaternary structure, homododecamer.

The catalysed reaction is 3-dehydroquinate = 3-dehydroshikimate + H2O. Its pathway is metabolic intermediate biosynthesis; chorismate biosynthesis; chorismate from D-erythrose 4-phosphate and phosphoenolpyruvate: step 3/7. Its function is as follows. Catalyzes a trans-dehydration via an enolate intermediate. The chain is 3-dehydroquinate dehydratase from Trichlorobacter lovleyi (strain ATCC BAA-1151 / DSM 17278 / SZ) (Geobacter lovleyi).